We begin with the raw amino-acid sequence, 223 residues long: uncharacterized protein (223 aa).

An N-terminal signal peptide occupies residues 1–22 (MHLKKALCPALCTFLIHLCLHA). In terms of domain architecture, VWFA spans 30 to 204 (DIFLMIDKSR…RSIAAAHSKR (175 aa)). Residues 199 to 223 (AAHSKRPTPTPPAKESSPRYTPSLD) form a disordered region.

This is an uncharacterized protein from Treponema pallidum (strain Nichols).